Reading from the N-terminus, the 183-residue chain is Hypoxanthine/guanine phosphoribosyltransferase (183 aa).

Belongs to the purine/pyrimidine phosphoribosyltransferase family. Archaeal HPRT subfamily. As to quaternary structure, homodimer.

Its subcellular location is the cytoplasm. The catalysed reaction is IMP + diphosphate = hypoxanthine + 5-phospho-alpha-D-ribose 1-diphosphate. It catalyses the reaction GMP + diphosphate = guanine + 5-phospho-alpha-D-ribose 1-diphosphate. It participates in purine metabolism; IMP biosynthesis via salvage pathway; IMP from hypoxanthine: step 1/1. Functionally, catalyzes a salvage reaction resulting in the formation of IMP that is energically less costly than de novo synthesis. This Methanocaldococcus vulcanius (strain ATCC 700851 / DSM 12094 / M7) (Methanococcus vulcanius) protein is Hypoxanthine/guanine phosphoribosyltransferase.